The sequence spans 351 residues: ABC transporter nucleoside-binding protein BmpA (351 aa).

Residues Met1–Gly21 form the signal peptide. Residue Cys22 is the site of N-palmitoyl cysteine attachment. Cys22 carries the S-diacylglycerol cysteine lipid modification.

The protein belongs to the BMP lipoprotein family. In terms of assembly, the complex is composed of two ATP-binding proteins (NupA), two transmembrane proteins (NupB and NupC) and a solute-binding protein (BmpA).

It localises to the cell membrane. In terms of biological role, part of an ABC transporter complex involved in the uptake of all common nucleosides. This is ABC transporter nucleoside-binding protein BmpA from Lactococcus lactis subsp. cremoris (strain MG1363).